The sequence spans 568 residues: Archaeosine synthase subunit alpha (568 aa).

In terms of domain architecture, PUA spans 496–565 (YDALKSYWVK…AKKGVAVKVR (70 aa)).

Belongs to the archaeosine synthase type 1 family. In terms of assembly, forms a robust complex with the archaeosine synthase beta subunit RaSEA, likely an alpha(2)beta(2) heterotetrameric structure. Formation of this complex highly increases lysine transfer activity.

It carries out the reaction 7-cyano-7-carbaguanosine(15) in tRNA + L-lysine = 7-N-[(5S)-5-amino-5-carboxypentyl]formamidino-7-deazaguanosine(15) in tRNA. The protein operates within tRNA modification; archaeosine-tRNA biosynthesis. In terms of biological role, functions in the biosynthesis of archaeosine, a modified nucleoside present in the dihydrouridine loop (D-loop) of archaeal tRNAs. Catalyzes the addition of L-lysine to the cyano group of 7-cyano-7-deazaguanine (preQ0)-modified tRNAs at position 15, to generate q0kN15-tRNA, a q0N lysine adduct identified as 7-N-[(5S)-5-amino-5-carboxypentyl]formamidino-7-deazaguanosine. This is Archaeosine synthase subunit alpha from Thermococcus kodakarensis (strain ATCC BAA-918 / JCM 12380 / KOD1) (Pyrococcus kodakaraensis (strain KOD1)).